Consider the following 532-residue polypeptide: CTP synthase (532 aa).

Residues 1 to 267 are amidoligase domain; it reads MAKFIFVTGG…QDIIIEQLQL (267 aa). S13 contacts CTP. UTP is bound at residue S13. ATP is bound at residue 14–19; that stretch reads GLGKGI. An L-glutamine-binding site is contributed by Y54. D71 provides a ligand contact to ATP. 2 residues coordinate Mg(2+): D71 and E141. Residues 148 to 150, 188 to 193, and K224 each bind CTP; these read DIE and KTKPIQ. UTP contacts are provided by residues 188–193 and K224; that span reads KTKPIQ. Positions 292–532 constitute a Glutamine amidotransferase type-1 domain; sequence EISFVGKYIE…FIKAIIENNK (241 aa). G354 provides a ligand contact to L-glutamine. The active-site Nucleophile; for glutamine hydrolysis is C381. L-glutamine contacts are provided by residues 382-385, E405, and R461; that span reads LGMQ. Catalysis depends on residues H506 and E508.

Belongs to the CTP synthase family. As to quaternary structure, homotetramer.

It catalyses the reaction UTP + L-glutamine + ATP + H2O = CTP + L-glutamate + ADP + phosphate + 2 H(+). It carries out the reaction L-glutamine + H2O = L-glutamate + NH4(+). The catalysed reaction is UTP + NH4(+) + ATP = CTP + ADP + phosphate + 2 H(+). Its pathway is pyrimidine metabolism; CTP biosynthesis via de novo pathway; CTP from UDP: step 2/2. With respect to regulation, allosterically activated by GTP, when glutamine is the substrate; GTP has no effect on the reaction when ammonia is the substrate. The allosteric effector GTP functions by stabilizing the protein conformation that binds the tetrahedral intermediate(s) formed during glutamine hydrolysis. Inhibited by the product CTP, via allosteric rather than competitive inhibition. Its function is as follows. Catalyzes the ATP-dependent amination of UTP to CTP with either L-glutamine or ammonia as the source of nitrogen. Regulates intracellular CTP levels through interactions with the four ribonucleotide triphosphates. In Mycoplasma capricolum subsp. capricolum (strain California kid / ATCC 27343 / NCTC 10154), this protein is CTP synthase.